The following is a 353-amino-acid chain: Rhodopsin (353 aa).

The Extracellular segment spans residues 1-36; it reads MNGTEGPFFYVPMVNTTGIVRSPYEYPQYYLVNPAA. N-linked (GlcNAc...) asparagine glycans are attached at residues N2 and N15. The helical transmembrane segment at 37–61 threads the bilayer; sequence YAALGAYMFLLILVGFPINFLTLYV. Topologically, residues 62–73 are cytoplasmic; that stretch reads TIEHKKLRTPLN. The chain crosses the membrane as a helical span at residues 74-96; that stretch reads YILLNLAVADLFMVLGGFTTTMY. Residues 97–110 are Extracellular-facing; it reads TSMHGYFVLGRLGC. The cysteines at positions 110 and 187 are disulfide-linked. A helical transmembrane segment spans residues 111–133; the sequence is NIEGFFATLGGEIALWSLVVLAI. A 'Ionic lock' involved in activated form stabilization motif is present at residues 134-136; the sequence is ERW. Residues 134–152 lie on the Cytoplasmic side of the membrane; it reads ERWVVVCKPISNFRFGENH. A helical transmembrane segment spans residues 153-173; the sequence is AIMGLAFTWTMAMACAAPPLV. Over 174 to 202 the chain is Extracellular; that stretch reads GWSRYIPEGMQCSCGIDYYTRAEGFNNES. N200 carries an N-linked (GlcNAc...) asparagine glycan. The chain crosses the membrane as a helical span at residues 203–224; sequence FVIYMFICHFTIPLTVVFFCYG. Residues 225 to 252 are Cytoplasmic-facing; sequence RLLCAVKEAAAAQQESETTQRAEKEVTR. The helical transmembrane segment at 253–274 threads the bilayer; the sequence is MVIMMVIAFLVCWLPYASVAWY. At 275–286 the chain is on the extracellular side; the sequence is IFTHQGSEFGPV. A helical membrane pass occupies residues 287–308; sequence FMTIPAFFAKSSSIYNPMIYIC. An N6-(retinylidene)lysine modification is found at K296. The Cytoplasmic segment spans residues 309–353; sequence LNKQFRHCMITTLCCGKNPFEEEEGASTASKTEASSVSSSSVSPA. Residues C322 and C323 are each lipidated (S-palmitoyl cysteine). The interval 331-353 is disordered; the sequence is EEGASTASKTEASSVSSSSVSPA. Positions 334-353 are enriched in low complexity; the sequence is ASTASKTEASSVSSSSVSPA.

This sequence belongs to the G-protein coupled receptor 1 family. Opsin subfamily. In terms of processing, phosphorylated on some or all of the serine and threonine residues present in the C-terminal region. Contains one covalently linked retinal chromophore.

It localises to the membrane. Its subcellular location is the cell projection. The protein resides in the cilium. It is found in the photoreceptor outer segment. Photoreceptor required for image-forming vision at low light intensity. While most salt water fish species use retinal as chromophore, most freshwater fish use 3-dehydroretinal, or a mixture of retinal and 3-dehydroretinal. Light-induced isomerization of 11-cis to all-trans retinal triggers a conformational change that activates signaling via G-proteins. Subsequent receptor phosphorylation mediates displacement of the bound G-protein alpha subunit by arrestin and terminates signaling. The sequence is that of Rhodopsin (rho) from Diplodus annularis (Annular seabream).